We begin with the raw amino-acid sequence, 427 residues long: Glutamate-1-semialdehyde 2,1-aminomutase (427 aa).

An N6-(pyridoxal phosphate)lysine modification is found at Lys-265.

This sequence belongs to the class-III pyridoxal-phosphate-dependent aminotransferase family. HemL subfamily. As to quaternary structure, homodimer. The cofactor is pyridoxal 5'-phosphate.

It localises to the cytoplasm. It catalyses the reaction (S)-4-amino-5-oxopentanoate = 5-aminolevulinate. It participates in porphyrin-containing compound metabolism; protoporphyrin-IX biosynthesis; 5-aminolevulinate from L-glutamyl-tRNA(Glu): step 2/2. The chain is Glutamate-1-semialdehyde 2,1-aminomutase from Burkholderia mallei (strain NCTC 10229).